We begin with the raw amino-acid sequence, 202 residues long: Imidazoleglycerol-phosphate dehydratase (202 aa).

This sequence belongs to the imidazoleglycerol-phosphate dehydratase family.

The protein resides in the cytoplasm. The catalysed reaction is D-erythro-1-(imidazol-4-yl)glycerol 3-phosphate = 3-(imidazol-4-yl)-2-oxopropyl phosphate + H2O. It participates in amino-acid biosynthesis; L-histidine biosynthesis; L-histidine from 5-phospho-alpha-D-ribose 1-diphosphate: step 6/9. This Brucella suis (strain ATCC 23445 / NCTC 10510) protein is Imidazoleglycerol-phosphate dehydratase.